Reading from the N-terminus, the 296-residue chain is Mitochondrial arginine transporter BAC2 (296 aa).

Solcar repeat units follow at residues 13 to 93, 104 to 187, and 198 to 282; these read GREF…FSRS, PSYR…VRER, and ENLR…ALRC. A run of 6 helical transmembrane segments spans residues 16–36, 70–90, 110–130, 162–181, 204–224, and 260–280; these read FVAGGFGGVAGIISGYPLDTL, AAPLASVTFQNAMVFQIYAIF, ALGGVATGAVQSLLLTPVELI, GLTITVLRDAPAHGLYFWTY, LVAGGLAGVASWVACYPLDVV, and TAVARAFVVNGAIFAAYEVAL.

It belongs to the mitochondrial carrier (TC 2.A.29) family. In terms of tissue distribution, high expression in flowers, stamens, petals and pollen. Expressed in roots, leaves and stems.

The protein resides in the mitochondrion inner membrane. With respect to regulation, inhibited by mercuric chloride. Its function is as follows. Mitochondrial arginine transporter that catalyzes the counter-exchange of arginine with lysine, ornithine, arginine, histidine and citrulline. Substrate preference in reconstituted proteoliposomes is arginine &gt; homoarginine &gt; citrulline &gt; histidine &gt; lysine &gt; ornithine. May be involved in the delivery of arginine, released from seed reserves, to mitochondrial arginase and the export of ornithine. May contribute to proline accumulation in response to hyperosmotic stress. The protein is Mitochondrial arginine transporter BAC2 (BAC2) of Arabidopsis thaliana (Mouse-ear cress).